The chain runs to 210 residues: Na(+)-translocating NADH-quinone reductase subunit D (210 aa).

The next 6 helical transmembrane spans lie at Val42–Ile62, Ile66–Val86, Val103–Met123, Phe131–Phe151, Leu154–Trp174, and Asn178–Val198.

This sequence belongs to the NqrDE/RnfAE family. Composed of six subunits; NqrA, NqrB, NqrC, NqrD, NqrE and NqrF.

It is found in the cell inner membrane. The enzyme catalyses a ubiquinone + n Na(+)(in) + NADH + H(+) = a ubiquinol + n Na(+)(out) + NAD(+). In terms of biological role, NQR complex catalyzes the reduction of ubiquinone-1 to ubiquinol by two successive reactions, coupled with the transport of Na(+) ions from the cytoplasm to the periplasm. NqrA to NqrE are probably involved in the second step, the conversion of ubisemiquinone to ubiquinol. This Psychromonas ingrahamii (strain DSM 17664 / CCUG 51855 / 37) protein is Na(+)-translocating NADH-quinone reductase subunit D.